The chain runs to 346 residues: Porphobilinogen deaminase (346 aa).

Cys-242 carries the post-translational modification S-(dipyrrolylmethanemethyl)cysteine. Residues 317 to 346 (ATEPGARSGTGAVRPPETDLSNPSPMENPQ) form a disordered region. Positions 335–346 (DLSNPSPMENPQ) are enriched in polar residues.

Belongs to the HMBS family. As to quaternary structure, monomer. Requires dipyrromethane as cofactor.

It catalyses the reaction 4 porphobilinogen + H2O = hydroxymethylbilane + 4 NH4(+). The protein operates within porphyrin-containing compound metabolism; protoporphyrin-IX biosynthesis; coproporphyrinogen-III from 5-aminolevulinate: step 2/4. In terms of biological role, tetrapolymerization of the monopyrrole PBG into the hydroxymethylbilane pre-uroporphyrinogen in several discrete steps. The sequence is that of Porphobilinogen deaminase from Nocardia farcinica (strain IFM 10152).